The following is a 388-amino-acid chain: Staphopain A (388 aa).

The signal sequence occupies residues 1 to 25 (MKRNFPKLIALSLIFSLSITPIANA). A propeptide spanning residues 26 to 214 (ESNSNIKAKD…TSQFKSNNYT (189 aa)) is cleaved from the precursor. Catalysis depends on residues cysteine 238, histidine 334, and asparagine 355.

This sequence belongs to the peptidase C47 family. In the cytoplasm, prematurely activated/folded ScpA forms a stable non-covalent complex with ScpB. Cleavage leads to the activation of ScpA probably by an auto-catalytic manner.

Its subcellular location is the secreted. It catalyses the reaction Broad endopeptidase action on proteins including elastin, but rather limited hydrolysis of small-molecule substrates. Assays are conveniently made with hemoglobin, casein or Z-Phe-Arg-NHMec as substrate.. Its activity is regulated as follows. Prematurely activated/folded staphopain A is inhibited by staphostatin A (ScpB), which is probably required to protect staphylococcal cytoplasmic proteins from degradation by ScpA. Also inactivated by heavy metal ions such as Hg(2+) or Ag(+), iodoacetamide, E-64 and human plasma. Cysteine protease that plays an important role in the inhibition of host innate immune response. Cleaves host elastins found in connective tissues, pulmonary surfactant protein A in the lungs, and the chemokine receptor CXCR2 on leukocytes. Proteolytic cleavage of surfactant protein A impairs bacterial phagocytosis by neutrophils while CXCR2 degradation blocks neutrophil activation and chemotaxis. Additionally, promotes vascular leakage by activating the plasma kallikerin/kinin system, resulting in hypotension. This is Staphopain A (sspP) from Staphylococcus aureus.